Here is a 555-residue protein sequence, read N- to C-terminus: Zinc finger and SCAN domain-containing protein 21 (555 aa).

4 disordered regions span residues 1–74 (MTKV…SKDK), 102–133 (TIKA…YHDT), 204–243 (LDEP…TQHV), and 263–354 (EEVF…RPAP). 3 repeat units span residues 18–56 (ESMG…QDTL), 57–95 (EPMG…QDTL), and 96–134 (EQLG…HDTP). The interval 18-134 (ESMGPSPIKV…FRQFGYHDTP (117 aa)) is 3 X 39 AA approximate tandem repeats. A Glycyl lysine isopeptide (Lys-Gly) (interchain with G-Cter in SUMO2) cross-link involves residue K26. Positions 122-204 (RQRFRQFGYH…TLLEDLEQEL (83 aa)) constitute an SCAN box domain. Polar residues predominate over residues 210–240 (QVSSPPNEQKQSWEKMSTSGTAMESLSSTET). The span at 280 to 302 (PQKEDSADEHRSSEEESHADGLK) shows a compositional bias: basic and acidic residues. Residues K302 and K313 each participate in a glycyl lysine isopeptide (Lys-Gly) (interchain with G-Cter in SUMO2) cross-link. Basic and acidic residues predominate over residues 316-332 (SRSERQWANNLERERGT). 7 consecutive C2H2-type zinc fingers follow at residues 359–381 (YICA…RRTH), 387–409 (YVCT…YRTH), 415–436 (YDCK…QRMH), 442–464 (YQCK…YRIH), 470–492 (YQCN…QRLH), 498–520 (YKCK…HRIH), and 526–548 (YWCS…QRVH). K431 is covalently cross-linked (Glycyl lysine isopeptide (Lys-Gly) (interchain with G-Cter in SUMO2)).

Belongs to the krueppel C2H2-type zinc-finger protein family. As to expression, expressed predominantly in the spermatocytes and spermatids of adult testes. It is also present at lower levels in the ovary, brain, spleen, embryo and fetus.

The protein resides in the nucleus. Strong transcriptional activator. Plays an important role in spermatogenesis; essential for the progression of meiotic prophase I in spermatocytes. This chain is Zinc finger and SCAN domain-containing protein 21 (Zscan21), found in Mus musculus (Mouse).